The following is a 1209-amino-acid chain: 3',5'-cyclic-AMP phosphodiesterase, isoform I (1209 aa).

7 disordered regions span residues 16 to 35 (NVAKHRGSGSSNGTGNGSGT), 59 to 82 (GGGSGSGGGGCGSGSGSGSGKRKS), 275 to 353 (LYSG…PLPP), 372 to 403 (SATSSSAGTVPPGGQQTQEYIAGTSSTPSPRI), 442 to 498 (ETLA…MQAE), 626 to 655 (VPASNKSRRPNQSSSASRSGNPPGAPLSQG), and 754 to 792 (SAGQYARSRSPRGPPMSQISGVKRPLSHTNSFTGERLPT). Gly residues-rich tracts occupy residues 25–35 (SSNGTGNGSGT) and 59–77 (GGGSGSGGGGCGSGSGSGS). Positions 275–290 (LYSGSNPSTNPCQSAV) are enriched in polar residues. A compositionally biased stretch (low complexity) spans 291–314 (QNQGQNSNPNPNQNPNTNPNQNQQ). Residues 315-324 (RCSCQPQTSP) show a composition bias toward polar residues. The span at 372-383 (SATSSSAGTVPP) shows a compositional bias: low complexity. Residues 385–400 (GQQTQEYIAGTSSTPS) are compositionally biased toward polar residues. Composition is skewed to low complexity over residues 445–462 (ASSSTTGGTATTTQNSSS) and 472–483 (TSSSASALATSH). Composition is skewed to polar residues over residues 484-498 (PSNSQLLPTSKMQAE) and 627-645 (PASNKSRRPNQSSSASRSG). A PDEase domain is found at 795–1124 (VETPRENELG…DYYQSMIPPS (330 aa)). His871 (proton donor) is an active-site residue. Residue 871 to 875 (HNSLH) participates in 3',5'-cyclic AMP binding. Positions 875, 911, 912, and 1029 each coordinate a divalent metal cation. Asp912, Asp1029, and Gln1080 together coordinate 3',5'-cyclic AMP. The segment covering 1146 to 1163 (EESDQENLAELEEGDESG) has biased composition (acidic residues). The interval 1146 to 1209 (EESDQENLAE…CQNQPQHGGM (64 aa)) is disordered. Positions 1164-1181 (GESTTTGTTGTTAASALS) are enriched in low complexity. Residues 1182–1193 (GAGGGGGGGGGM) are compositionally biased toward gly residues. A compositionally biased stretch (polar residues) spans 1199-1209 (GCQNQPQHGGM).

It belongs to the cyclic nucleotide phosphodiesterase family. PDE4 subfamily. In terms of assembly, monomer. The cofactor is a divalent metal cation.

It catalyses the reaction 3',5'-cyclic AMP + H2O = AMP + H(+). It functions in the pathway purine metabolism; 3',5'-cyclic AMP degradation; AMP from 3',5'-cyclic AMP: step 1/1. In terms of biological role, hydrolyzes the second messenger cAMP, which is a key regulator of many important physiological processes. Vital for female fertility. Required for learning/memory. The polypeptide is 3',5'-cyclic-AMP phosphodiesterase, isoform I (Drosophila melanogaster (Fruit fly)).